The chain runs to 145 residues: Ribonuclease H (145 aa).

The RNase H type-1 domain occupies 1–142 (MDTPVYLYTD…ADDLANRGAA (142 aa)). Residues Asp10, Glu48, Asp70, and Asp134 each coordinate Mg(2+).

This sequence belongs to the RNase H family. Monomer. The cofactor is Mg(2+).

The protein resides in the cytoplasm. It carries out the reaction Endonucleolytic cleavage to 5'-phosphomonoester.. Functionally, endonuclease that specifically degrades the RNA of RNA-DNA hybrids. The chain is Ribonuclease H from Neisseria meningitidis serogroup C / serotype 2a (strain ATCC 700532 / DSM 15464 / FAM18).